A 261-amino-acid chain; its full sequence is Ribosomal RNA small subunit methyltransferase J (261 aa).

S-adenosyl-L-methionine contacts are provided by residues 129–130 (ER) and aspartate 182.

The protein belongs to the methyltransferase superfamily. RsmJ family.

It localises to the cytoplasm. It catalyses the reaction guanosine(1516) in 16S rRNA + S-adenosyl-L-methionine = N(2)-methylguanosine(1516) in 16S rRNA + S-adenosyl-L-homocysteine + H(+). Functionally, specifically methylates the guanosine in position 1516 of 16S rRNA. The sequence is that of Ribosomal RNA small subunit methyltransferase J from Desulfotalea psychrophila (strain LSv54 / DSM 12343).